We begin with the raw amino-acid sequence, 80 residues long: Conotoxin Bu14 (80 aa).

An N-terminal signal peptide occupies residues 1–8 (AACQLGTA). A propeptide spanning residues 9-40 (ASFARDKQDYPAVRSDGRQDSKDSTLDRIAKR) is cleaved from the precursor. Cystine bridges form between Cys-41–Cys-55, Cys-48–Cys-59, and Cys-54–Cys-69.

This sequence belongs to the conotoxin O1 superfamily. In terms of tissue distribution, expressed by the venom duct.

It is found in the secreted. In Conus bullatus (Bubble cone), this protein is Conotoxin Bu14.